A 91-amino-acid polypeptide reads, in one-letter code: MANTASAEKRNRQAQKRRARNVQVRTGVKSAVKKLREAIAKGDPAATQVALKSAEKTIGKAASKGVLHKNAASRKISRLAKAAAKPAAAAK.

Residues 1–28 (MANTASAEKRNRQAQKRRARNVQVRTGV) form a disordered region.

It belongs to the bacterial ribosomal protein bS20 family.

Its function is as follows. Binds directly to 16S ribosomal RNA. This chain is Small ribosomal subunit protein bS20, found in Anaeromyxobacter dehalogenans (strain 2CP-1 / ATCC BAA-258).